A 34-amino-acid polypeptide reads, in one-letter code: Photosystem II reaction center protein T (34 aa).

A helical membrane pass occupies residues 3 to 23; that stretch reads ALVYTFLLVSTLGIIFFAIFF.

Belongs to the PsbT family. As to quaternary structure, PSII is composed of 1 copy each of membrane proteins PsbA, PsbB, PsbC, PsbD, PsbE, PsbF, PsbH, PsbI, PsbJ, PsbK, PsbL, PsbM, PsbT, PsbY, PsbZ, Psb30/Ycf12, at least 3 peripheral proteins of the oxygen-evolving complex and a large number of cofactors. It forms dimeric complexes.

The protein resides in the plastid. Its subcellular location is the chloroplast thylakoid membrane. Found at the monomer-monomer interface of the photosystem II (PS II) dimer, plays a role in assembly and dimerization of PSII. PSII is a light-driven water plastoquinone oxidoreductase, using light energy to abstract electrons from H(2)O, generating a proton gradient subsequently used for ATP formation. This Atropa belladonna (Belladonna) protein is Photosystem II reaction center protein T.